Here is a 243-residue protein sequence, read N- to C-terminus: 2-C-methyl-D-erythritol 4-phosphate cytidylyltransferase (243 aa).

Belongs to the IspD/TarI cytidylyltransferase family. IspD subfamily.

The enzyme catalyses 2-C-methyl-D-erythritol 4-phosphate + CTP + H(+) = 4-CDP-2-C-methyl-D-erythritol + diphosphate. Its pathway is isoprenoid biosynthesis; isopentenyl diphosphate biosynthesis via DXP pathway; isopentenyl diphosphate from 1-deoxy-D-xylulose 5-phosphate: step 2/6. Functionally, catalyzes the formation of 4-diphosphocytidyl-2-C-methyl-D-erythritol from CTP and 2-C-methyl-D-erythritol 4-phosphate (MEP). This chain is 2-C-methyl-D-erythritol 4-phosphate cytidylyltransferase, found in Pelodictyon phaeoclathratiforme (strain DSM 5477 / BU-1).